The primary structure comprises 457 residues: Probable xyloglucan 6-xylosyltransferase 3 (457 aa).

The interval 1-40 (MGKEDGFRTQKRVSTASSAAAGVLPTTMASGGVRRPPPRG) is disordered. Topologically, residues 1-51 (MGKEDGFRTQKRVSTASSAAAGVLPTTMASGGVRRPPPRGRQIQKTFNNVK) are cytoplasmic. Residues 52-71 (MTILCGFVTILVLRGTIGIN) traverse the membrane as a helical; Signal-anchor for type II membrane protein segment. Residues 72 to 457 (FGTSDADVVN…TTPLKIEARS (386 aa)) lie on the Lumenal side of the membrane. 2 N-linked (GlcNAc...) asparagine glycosylation sites follow: Asn-115 and Asn-431.

Belongs to the glycosyltransferase 34 family.

The protein resides in the golgi apparatus membrane. The catalysed reaction is Transfers an alpha-D-xylosyl residue from UDP-D-xylose to a glucose residue in xyloglucan, forming an alpha-(1-&gt;6)-D-xylosyl-D-glucose linkage.. Its function is as follows. Probable xyloglucan xylosyltransferase involved in the biosynthesis of xyloglucan. This is Probable xyloglucan 6-xylosyltransferase 3 from Arabidopsis thaliana (Mouse-ear cress).